The following is a 422-amino-acid chain: Protein FAM53B (422 aa).

Residues S118, S167, S169, S179, S212, and S268 each carry the phosphoserine modification. The span at 245 to 268 shows a compositional bias: low complexity; that stretch reads SANSTPASTPELARRSSGLSRSRS. Residues 245-269 are disordered; that stretch reads SANSTPASTPELARRSSGLSRSRSQ. Residues 281–284 carry the Nuclear localization signal motif; the sequence is KRRR.

Belongs to the FAM53 family. As to quaternary structure, interacts with CTNNB1. As to expression, detected in skeletal muscle, kidney, spleen, thyroid, testis, ovary, small intestine, colon and peripheral blood.

Its subcellular location is the nucleus. Functionally, acts as a regulator of Wnt signaling pathway by regulating beta-catenin (CTNNB1) nuclear localization. The sequence is that of Protein FAM53B from Homo sapiens (Human).